The primary structure comprises 400 residues: GTPase-binding protein rid1 (400 aa).

The segment covering Leu-16–Ser-27 has biased composition (polar residues). Residues Leu-16–Met-47 form a disordered region. A GBD/FH3 domain is found at Pro-39–Thr-400.

It is found in the cytoplasm. The sequence is that of GTPase-binding protein rid1 (rid1) from Schizosaccharomyces pombe (strain 972 / ATCC 24843) (Fission yeast).